Reading from the N-terminus, the 337-residue chain is Phenylalanine--tRNA ligase alpha subunit (337 aa).

Residue E252 coordinates Mg(2+).

It belongs to the class-II aminoacyl-tRNA synthetase family. Phe-tRNA synthetase alpha subunit type 1 subfamily. Tetramer of two alpha and two beta subunits. Mg(2+) serves as cofactor.

Its subcellular location is the cytoplasm. It carries out the reaction tRNA(Phe) + L-phenylalanine + ATP = L-phenylalanyl-tRNA(Phe) + AMP + diphosphate + H(+). This chain is Phenylalanine--tRNA ligase alpha subunit, found in Francisella philomiragia subsp. philomiragia (strain ATCC 25017 / CCUG 19701 / FSC 153 / O#319-036).